The chain runs to 173 residues: MALRPARCYRTTERRSYTRKEYVRAVPQPKVVHYVMGNSSVEFPVEVQLVSKSDILIRHNALESSRIAGNKYIMGECGRTGYLFNIRVYPHEILRENKMAAGAGADRISDGMRLSFGKAVGTAAKVKKGQEIITIGVNPERFYAAKEALRRCSMKLPTACKIVVTKGKELIKD.

It belongs to the universal ribosomal protein uL16 family.

This Methanococcus maripaludis (strain C5 / ATCC BAA-1333) protein is Large ribosomal subunit protein uL16.